Here is a 443-residue protein sequence, read N- to C-terminus: Serine transporter (443 aa).

A run of 11 helical transmembrane segments spans residues 38–60 (TGWV…PVQV), 65–87 (LWVF…RLFI), 111–131 (WGIL…FVYS), 150–170 (GLLS…VAIS), 183–203 (GMVL…VGMW), 215–235 (GLLV…ILFI), 265–285 (IAFG…TLAM), 319–339 (VSVI…YLGF), 368–388 (GIMI…APVL), 390–410 (FTSI…AWLV), and 422–442 (MSLY…FLAF).

The protein belongs to the amino acid/polyamine transporter 2 family. SdaC/TdcC subfamily.

It is found in the cell inner membrane. Functionally, transports both D- and L-serine; allows growth of strain CFT073 cells normally unable to transport D-serine on that substrate. Transport relies on the H(+) gradient and is not competed by L-threonine. May play a role in L-cysteine detoxification. The sequence is that of Serine transporter from Escherichia coli O157:H7.